Consider the following 130-residue polypeptide: Large ribosomal subunit protein uL22 (130 aa).

This sequence belongs to the universal ribosomal protein uL22 family. As to quaternary structure, part of the 50S ribosomal subunit.

This protein binds specifically to 23S rRNA; its binding is stimulated by other ribosomal proteins, e.g. L4, L17, and L20. It is important during the early stages of 50S assembly. It makes multiple contacts with different domains of the 23S rRNA in the assembled 50S subunit and ribosome. Its function is as follows. The globular domain of the protein is located near the polypeptide exit tunnel on the outside of the subunit, while an extended beta-hairpin is found that lines the wall of the exit tunnel in the center of the 70S ribosome. In Clavibacter michiganensis subsp. michiganensis (strain NCPPB 382), this protein is Large ribosomal subunit protein uL22.